A 691-amino-acid polypeptide reads, in one-letter code: Transcription termination factor Rho (691 aa).

The interval 48 to 303 (ISDHQRGGSV…PEVDETELTE (256 aa)) is disordered. The span at 50-64 (DHQRGGSVADRDAAE) shows a compositional bias: basic and acidic residues. Low complexity-rich tracts occupy residues 65-92 (RAAQ…PAAE) and 105-119 (DTSA…QPQA). 2 stretches are compositionally biased toward basic and acidic residues: residues 120-158 (EARE…SERR) and 188-273 (DADR…EGGR). A Rho RNA-BD domain is found at 307–390 (LQPVAGILDV…VKISSVNGQP (84 aa)). ATP contacts are provided by residues 433–438 (GKGQRG), 445–450 (KAGKTM), and Arg476.

It belongs to the Rho family. In terms of assembly, homohexamer. The homohexamer assembles into an open ring structure.

In terms of biological role, facilitates transcription termination by a mechanism that involves Rho binding to the nascent RNA, activation of Rho's RNA-dependent ATPase activity, and release of the mRNA from the DNA template. This Micrococcus luteus (Micrococcus lysodeikticus) protein is Transcription termination factor Rho.